The sequence spans 245 residues: Orotidine 5'-phosphate decarboxylase (245 aa).

Substrate contacts are provided by residues aspartate 22, lysine 44, 71-80, threonine 131, arginine 192, glutamine 201, glycine 221, and arginine 222; that span reads DLKFHDIPNT. Lysine 73 serves as the catalytic Proton donor.

It belongs to the OMP decarboxylase family. Type 1 subfamily. In terms of assembly, homodimer.

The enzyme catalyses orotidine 5'-phosphate + H(+) = UMP + CO2. It participates in pyrimidine metabolism; UMP biosynthesis via de novo pathway; UMP from orotate: step 2/2. Catalyzes the decarboxylation of orotidine 5'-monophosphate (OMP) to uridine 5'-monophosphate (UMP). The protein is Orotidine 5'-phosphate decarboxylase of Escherichia coli O6:K15:H31 (strain 536 / UPEC).